Reading from the N-terminus, the 189-residue chain is Elongation factor P (189 aa).

Belongs to the elongation factor P family.

It is found in the cytoplasm. Its pathway is protein biosynthesis; polypeptide chain elongation. In terms of biological role, involved in peptide bond synthesis. Stimulates efficient translation and peptide-bond synthesis on native or reconstituted 70S ribosomes in vitro. Probably functions indirectly by altering the affinity of the ribosome for aminoacyl-tRNA, thus increasing their reactivity as acceptors for peptidyl transferase. The polypeptide is Elongation factor P (Campylobacter jejuni subsp. doylei (strain ATCC BAA-1458 / RM4099 / 269.97)).